Here is a 537-residue protein sequence, read N- to C-terminus: MNQTKYIFVTGGVTSSLGKGIIAASLAKLLQGRGYRTTIQKFDPYINVDPGTLNPYEHGECYVTDDGAETDLDLGHYERFLNVPTSQANNVTTGRVYLSVIEKERRGEFLGKTVQVVPHITNEIKDRMQLLGKSGDYDIVITEIGGTVGDIESLPYIESVRQLVWELGENNGIVIHLTLVPYLAAAGELKTKPTQHSVKTLMESGIKADILVCRTEHELSQELRQKLALFCNVKKEAVIQSIDASTIYEVPNLMLEEGLDVVALKKLDLPKKASPDLKNWNTFLKRLKSPKQTVNIGLVGKYVEMQDCYKSILEAFIHAGAANETKVNVISIHSEHINADNVEEKLGTLDGVLVAPGFGERGIEGKIEAVRYVRENNIPFFGICLGMQMSVIEYSRNILGYADANSTEMNEKTPHPVVNLMEEQKNITDKGGTMRLGAWKCDIKPNTLAHRIYGEKTISERHRHRYEYNNKYADELQKAGLKASGVNPDTGLVEIVELENHPFFIGVQYHPEYKSTVANPHPIFVNFVAAAVNAHKK.

Positions 1–269 (MNQTKYIFVT…DVVALKKLDL (269 aa)) are amidoligase domain. Residue Ser15 coordinates CTP. A UTP-binding site is contributed by Ser15. 16 to 21 (SLGKGI) serves as a coordination point for ATP. Tyr56 is an L-glutamine binding site. Asp73 provides a ligand contact to ATP. 2 residues coordinate Mg(2+): Asp73 and Glu143. CTP contacts are provided by residues 150-152 (DIE), 190-195 (KTKPTQ), and Lys226. Residues 190 to 195 (KTKPTQ) and Lys226 contribute to the UTP site. In terms of domain architecture, Glutamine amidotransferase type-1 spans 295 to 537 (NIGLVGKYVE…VAAAVNAHKK (243 aa)). Gly357 contacts L-glutamine. The active-site Nucleophile; for glutamine hydrolysis is the Cys384. Residues 385–388 (LGMQ), Glu408, and Arg465 contribute to the L-glutamine site. Residues His510 and Glu512 contribute to the active site.

Belongs to the CTP synthase family. As to quaternary structure, homotetramer.

It catalyses the reaction UTP + L-glutamine + ATP + H2O = CTP + L-glutamate + ADP + phosphate + 2 H(+). The catalysed reaction is L-glutamine + H2O = L-glutamate + NH4(+). It carries out the reaction UTP + NH4(+) + ATP = CTP + ADP + phosphate + 2 H(+). It functions in the pathway pyrimidine metabolism; CTP biosynthesis via de novo pathway; CTP from UDP: step 2/2. With respect to regulation, allosterically activated by GTP, when glutamine is the substrate; GTP has no effect on the reaction when ammonia is the substrate. The allosteric effector GTP functions by stabilizing the protein conformation that binds the tetrahedral intermediate(s) formed during glutamine hydrolysis. Inhibited by the product CTP, via allosteric rather than competitive inhibition. Functionally, catalyzes the ATP-dependent amination of UTP to CTP with either L-glutamine or ammonia as the source of nitrogen. Regulates intracellular CTP levels through interactions with the four ribonucleotide triphosphates. The chain is CTP synthase from Flavobacterium johnsoniae (strain ATCC 17061 / DSM 2064 / JCM 8514 / BCRC 14874 / CCUG 350202 / NBRC 14942 / NCIMB 11054 / UW101) (Cytophaga johnsonae).